The primary structure comprises 233 residues: Orotidine 5'-phosphate decarboxylase (233 aa).

Substrate contacts are provided by residues D11, K34, D61–T70, T117, R179, Q188, G208, and R209. K63 acts as the Proton donor in catalysis.

The protein belongs to the OMP decarboxylase family. Type 1 subfamily. In terms of assembly, homodimer.

It carries out the reaction orotidine 5'-phosphate + H(+) = UMP + CO2. The protein operates within pyrimidine metabolism; UMP biosynthesis via de novo pathway; UMP from orotate: step 2/2. Its function is as follows. Catalyzes the decarboxylation of orotidine 5'-monophosphate (OMP) to uridine 5'-monophosphate (UMP). The polypeptide is Orotidine 5'-phosphate decarboxylase (Streptococcus pneumoniae (strain CGSP14)).